We begin with the raw amino-acid sequence, 214 residues long: Phosphoenolpyruvate guanylyltransferase (214 aa).

Phosphoenolpyruvate is bound by residues threonine 148, glycine 163, and serine 166.

The protein belongs to the CofC family.

The enzyme catalyses phosphoenolpyruvate + GTP + H(+) = enolpyruvoyl-2-diphospho-5'-guanosine + diphosphate. The protein operates within cofactor biosynthesis; coenzyme F420 biosynthesis. In terms of biological role, guanylyltransferase that catalyzes the activation of phosphoenolpyruvate (PEP) as enolpyruvoyl-2-diphospho-5'-guanosine, via the condensation of PEP with GTP. It is involved in the biosynthesis of coenzyme F420, a hydride carrier cofactor. The sequence is that of Phosphoenolpyruvate guanylyltransferase from Mycolicibacterium gilvum (strain PYR-GCK) (Mycobacterium gilvum (strain PYR-GCK)).